The chain runs to 93 residues: Small ribosomal subunit protein uS19 (93 aa).

Belongs to the universal ribosomal protein uS19 family.

Functionally, protein S19 forms a complex with S13 that binds strongly to the 16S ribosomal RNA. This Lawsonia intracellularis (strain PHE/MN1-00) protein is Small ribosomal subunit protein uS19.